We begin with the raw amino-acid sequence, 331 residues long: Probable inactive O-methyltransferase 11 (331 aa).

S-adenosyl-L-methionine contacts are provided by residues glycine 179, aspartate 202, 224 to 226 (GDF), aspartate 225, phenylalanine 226, and lysine 239.

Belongs to the class I-like SAM-binding methyltransferase superfamily. Cation-independent O-methyltransferase family. COMT subfamily.

The protein is Probable inactive O-methyltransferase 11 (omt11) of Dictyostelium discoideum (Social amoeba).